A 473-amino-acid chain; its full sequence is Glycine--tRNA ligase (473 aa).

R101 and E172 together coordinate substrate. ATP is bound by residues 204 to 206 (RNE), 214 to 219 (FRTREF), 289 to 290 (EL), and 333 to 336 (GVER). A substrate-binding site is contributed by 219 to 223 (FEQME). 329 to 333 (EPSVG) provides a ligand contact to substrate.

This sequence belongs to the class-II aminoacyl-tRNA synthetase family. As to quaternary structure, homodimer.

The protein localises to the cytoplasm. The enzyme catalyses tRNA(Gly) + glycine + ATP = glycyl-tRNA(Gly) + AMP + diphosphate. Functionally, catalyzes the attachment of glycine to tRNA(Gly). This is Glycine--tRNA ligase from Ureaplasma urealyticum serovar 10 (strain ATCC 33699 / Western).